The primary structure comprises 294 residues: MDNALKAEVLIESLPYICKFQDQKIVIKYGGHAMVDEEAKSWIAKDVVLLRFVGLNPVIIHGGGPEINKAMEKMGKEPEFIHGLRVTDEETLDIVKMVLIGKINGDIVSKLGKYGGKAVGLSGKSGHLISARKKIQYIIKEDEKIEVDLGRVGEVDSINTELIDILLEKKYIPVISPIGIDSQANTYNLNADIAAGDIAGAINAKKLIMITDVDGVMDDINDPSTIYKKLTISQVGEMIDKGIISGGMIPKIEACVNALRKGVDSVHIINGKIPHSVLLEVFTEEGIGTMITRD.

Residues 63–64, arginine 85, and asparagine 188 contribute to the substrate site; that span reads GG.

Belongs to the acetylglutamate kinase family. ArgB subfamily.

It is found in the cytoplasm. The enzyme catalyses N-acetyl-L-glutamate + ATP = N-acetyl-L-glutamyl 5-phosphate + ADP. Its pathway is amino-acid biosynthesis; L-arginine biosynthesis; N(2)-acetyl-L-ornithine from L-glutamate: step 2/4. Functionally, catalyzes the ATP-dependent phosphorylation of N-acetyl-L-glutamate. This chain is Acetylglutamate kinase, found in Methanococcus aeolicus (strain ATCC BAA-1280 / DSM 17508 / OCM 812 / Nankai-3).